A 287-amino-acid polypeptide reads, in one-letter code: Protease HtpX (287 aa).

The next 2 helical transmembrane spans lie at 4–24 and 33–53; these read IFLL…VMSI and GGLL…SLAI. His-139 lines the Zn(2+) pocket. Residue Glu-140 is part of the active site. Position 143 (His-143) interacts with Zn(2+). 2 consecutive transmembrane segments (helical) span residues 154-174 and 195-215; these read LIQG…AGII and AVVF…VAYF. Glu-220 serves as a coordination point for Zn(2+).

The protein belongs to the peptidase M48B family. The cofactor is Zn(2+).

It localises to the cell inner membrane. The sequence is that of Protease HtpX from Shewanella pealeana (strain ATCC 700345 / ANG-SQ1).